Reading from the N-terminus, the 391-residue chain is Deoxyguanosinetriphosphate triphosphohydrolase-like protein (391 aa).

Residues Arg-62 to Ile-198 form the HD domain.

It belongs to the dGTPase family. Type 2 subfamily.

This is Deoxyguanosinetriphosphate triphosphohydrolase-like protein from Rickettsia akari (strain Hartford).